A 142-amino-acid polypeptide reads, in one-letter code: ATP synthase epsilon chain (142 aa).

It belongs to the ATPase epsilon chain family. As to quaternary structure, F-type ATPases have 2 components, CF(1) - the catalytic core - and CF(0) - the membrane proton channel. CF(1) has five subunits: alpha(3), beta(3), gamma(1), delta(1), epsilon(1). CF(0) has three main subunits: a, b and c.

The protein localises to the cell inner membrane. Functionally, produces ATP from ADP in the presence of a proton gradient across the membrane. The sequence is that of ATP synthase epsilon chain from Mannheimia succiniciproducens (strain KCTC 0769BP / MBEL55E).